The sequence spans 120 residues: Flagellar protein FliT (120 aa).

A required for homodimerization region spans residues 1–50; that stretch reads MNDFISSLNNWQALYALSNTMLSLANSGQWDELIEQEVKYVTLVEAIARN. The segment at 59–97 is fliD binding; it reads FQEKARELLTKVLANEAALKIKLQARMEELRVLIEQNGN.

It belongs to the FliT family. In terms of assembly, homodimer. Interacts with FliD and FlhC.

Its subcellular location is the cytoplasm. It localises to the cytosol. In terms of biological role, dual-function protein that regulates the transcription of class 2 flagellar operons and that also acts as an export chaperone for the filament-capping protein FliD. As a transcriptional regulator, acts as an anti-FlhDC factor; it directly binds FlhC, thus inhibiting the binding of the FlhC/FlhD complex to class 2 promoters, resulting in decreased expression of class 2 flagellar operons. As a chaperone, effects FliD transition to the membrane by preventing its premature polymerization, and by directing it to the export apparatus. This is Flagellar protein FliT from Cronobacter sakazakii (strain ATCC BAA-894) (Enterobacter sakazakii).